A 435-amino-acid polypeptide reads, in one-letter code: Kynurenine--oxoglutarate transaminase (435 aa).

Gly-46 and Asn-198 together coordinate substrate. N6-(pyridoxal phosphate)lysine is present on Lys-262. Arg-413 contributes to the substrate binding site.

This sequence belongs to the class-I pyridoxal-phosphate-dependent aminotransferase family. As to quaternary structure, homodimer. It depends on pyridoxal 5'-phosphate as a cofactor.

Its subcellular location is the cytoplasm. The catalysed reaction is L-kynurenine + 2-oxoglutarate = kynurenate + L-glutamate + H2O. It carries out the reaction 3-phenylpyruvate + L-glutamine = 2-oxoglutaramate + L-phenylalanine. It catalyses the reaction an S-substituted L-cysteine + H2O = a thiol + pyruvate + NH4(+). It participates in amino-acid degradation; L-kynurenine degradation; kynurenate from L-kynurenine: step 1/2. Functionally, catalyzes the irreversible transamination of the L-tryptophan metabolite L-kynurenine to form kynurenic acid (KA). Metabolizes the cysteine conjugates of certain halogenated alkenes and alkanes to form reactive metabolites. Catalyzes the beta-elimination of S-conjugates and Se-conjugates of L-(seleno)cysteine, resulting in the cleavage of the C-S or C-Se bond. This chain is Kynurenine--oxoglutarate transaminase (ccbl), found in Dictyostelium discoideum (Social amoeba).